We begin with the raw amino-acid sequence, 148 residues long: UPF0756 membrane protein ESA_02180 (148 aa).

4 helical membrane passes run 4-24 (ITLL…NMAV), 51-71 (VTVG…SGTL), 86-106 (LVAI…VALM), and 112-132 (IVAG…GVPV).

It belongs to the UPF0756 family.

It is found in the cell membrane. This is UPF0756 membrane protein ESA_02180 from Cronobacter sakazakii (strain ATCC BAA-894) (Enterobacter sakazakii).